The sequence spans 485 residues: Leukocyte receptor cluster member 9 (485 aa).

A C3H1-type zinc finger spans residues 8–35; the sequence is SEAPAVCRFFLEGRCRFGARCRQPHPGA. Residues 212–247 form a disordered region; the sequence is ETRTGLDSSLETPEVDGPTKETGLNGTTELEMPDPS.

In Mus musculus (Mouse), this protein is Leukocyte receptor cluster member 9 (Leng9).